Reading from the N-terminus, the 590-residue chain is Phenylalanine--tRNA ligase beta subunit (590 aa).

The B5 domain occupies 276–382 (MELDVWDVPV…IMYNYDRFEP (107 aa)). Residues Asn360, Asp366, Glu369, and Asp370 each coordinate Mg(2+).

The protein belongs to the phenylalanyl-tRNA synthetase beta subunit family. Type 2 subfamily. Tetramer of two alpha and two beta subunits. Mg(2+) is required as a cofactor.

Its subcellular location is the cytoplasm. The enzyme catalyses tRNA(Phe) + L-phenylalanine + ATP = L-phenylalanyl-tRNA(Phe) + AMP + diphosphate + H(+). In Methanopyrus kandleri (strain AV19 / DSM 6324 / JCM 9639 / NBRC 100938), this protein is Phenylalanine--tRNA ligase beta subunit.